Reading from the N-terminus, the 335-residue chain is Nod factor export ATP-binding protein I (335 aa).

Residues 37 to 267 (IDVASVTKSY…KIGCQVIEIY (231 aa)) enclose the ABC transporter domain. 69 to 76 (GPNGAGKS) contacts ATP.

This sequence belongs to the ABC transporter superfamily. Lipooligosaccharide exporter (TC 3.A.1.102) family. In terms of assembly, the complex is composed of two ATP-binding proteins (NodI) and two transmembrane proteins (NodJ).

The protein localises to the cell inner membrane. In terms of biological role, part of the ABC transporter complex NodIJ involved in the export of the nodulation factors (Nod factors), the bacterial signal molecules that induce symbiosis and subsequent nodulation induction. Nod factors are LCO (lipo-chitin oligosaccharide), a modified beta-1,4-linked N-acetylglucosamine oligosaccharide. This subunit is responsible for energy coupling to the transport system. The polypeptide is Nod factor export ATP-binding protein I (Rhizobium meliloti (strain 1021) (Ensifer meliloti)).